An 801-amino-acid polypeptide reads, in one-letter code: Squamosa promoter-binding-like protein 7 (801 aa).

Disordered stretches follow at residues 1–23 (MSSL…LVND) and 59–91 (SPPL…DRVR). The SBP-type; atypical zinc-finger motif lies at 135–212 (VARCQVPDCE…ERHNNRRKRK (78 aa)). Residues Cys-138, Cys-143, Cys-160, Cys-163, Cys-179, Cys-182, His-186, and Cys-198 each coordinate Zn(2+). The Bipartite nuclear localization signal motif lies at 195–211 (KRSCRRKLERHNNRRKR). The segment covering 203-213 (ERHNNRRKRKP) has biased composition (basic residues). Disordered regions lie at residues 203-258 (ERHN…PSLI) and 286-313 (GSGE…NKSA). The segment covering 222-233 (EQQQVLSQNDNS) has biased composition (polar residues). A compositionally biased stretch (basic and acidic residues) spans 249 to 258 (QRAEEEPSLI). Residues 304 to 313 (SPSNGDNKSA) are compositionally biased toward polar residues.

Homodimer. Interacts with KIN17. Interacts with HY5. It depends on Zn(2+) as a cofactor. In terms of tissue distribution, expressed in roots rosette leaves, cauline leaves, stems, flowers and siliques.

Its subcellular location is the nucleus speckle. Transcription factor that participates in reprogramming global gene expression during copper deficiency in order to improve the metal uptake and prioritize its distribution to copper proteins of major importance. Binds directly to 5'-GTAC-3' motifs in the microRNA (miRNA) promoter of the stress-responsive miRNAs miR398b and miR398c to activate their transcription. During copper deficiency, activates the copper transporters COPT1 and COPT2, and the copper chaperone CCH, directly or indirectly via miRNAs. Required for the expression of the miRNAs miR397, miR408 and miR857. Acts coordinately with HY5 to regulate miR408 and its target genes in response to changes in light and copper conditions. Activates miR857 and its target genes in response to low copper conditions. Involved in cadmium stress response by regulating miR397a, miR398b, miR398c and miR857. Required for iron homeostasis during copper deficiency. The protein is Squamosa promoter-binding-like protein 7 (SPL7) of Arabidopsis thaliana (Mouse-ear cress).